Consider the following 113-residue polypeptide: Heavy metal-associated isoprenylated plant protein 15 (113 aa).

In terms of domain architecture, HMA spans methionine 1 to tyrosine 65. A coiled-coil region spans residues aspartate 69–glutamate 89. Cysteine methyl ester is present on cysteine 110. The S-farnesyl cysteine moiety is linked to residue cysteine 110. A propeptide spans valine 111–cysteine 113 (removed in mature form).

The protein belongs to the HIPP family. Expressed in embryo sacs.

Functionally, probable heavy-metal-binding protein. This chain is Heavy metal-associated isoprenylated plant protein 15, found in Arabidopsis thaliana (Mouse-ear cress).